Reading from the N-terminus, the 211-residue chain is Ion-translocating oxidoreductase complex subunit G (211 aa).

The helical transmembrane segment at 9-29 (GLTLAIFACATTGLVAMTQYL) threads the bilayer. At Thr-175 the chain carries FMN phosphoryl threonine.

This sequence belongs to the RnfG family. In terms of assembly, the complex is composed of six subunits: RnfA, RnfB, RnfC, RnfD, RnfE and RnfG. The cofactor is FMN.

It is found in the cell inner membrane. In terms of biological role, part of a membrane-bound complex that couples electron transfer with translocation of ions across the membrane. The sequence is that of Ion-translocating oxidoreductase complex subunit G from Vibrio vulnificus (strain YJ016).